Here is a 318-residue protein sequence, read N- to C-terminus: Death effector domain-containing protein (318 aa).

A DED domain is found at 25–103 (SLHRMFDIVG…RHDLLPYVTL (79 aa)). Disordered regions lie at residues 128–147 (PRALSDPEPRPPQPSKTVPP) and 160–191 (QMCSKRPARGRATLGSQRKRRKSVTPDPKEKQ).

As to quaternary structure, interacts with CASP8, CASP10, KRT8, KRT18, CASP3 and FADD. Homodimerizes and heterodimerizes with DEDD2. In terms of processing, exists predominantly in a mono- or diubiquitinated form. As to expression, widely expressed with highest levels in testis.

The protein localises to the cytoplasm. Its subcellular location is the nucleus. It localises to the nucleolus. Its function is as follows. A scaffold protein that directs CASP3 to certain substrates and facilitates their ordered degradation during apoptosis. May also play a role in mediating CASP3 cleavage of KRT18. Regulates degradation of intermediate filaments during apoptosis. May play a role in the general transcription machinery in the nucleus and might be an important regulator of the activity of GTF3C3. Inhibits DNA transcription in vitro. The chain is Death effector domain-containing protein (DEDD) from Homo sapiens (Human).